The following is a 293-amino-acid chain: MIEAVDLHFCYGDAEVLKGVNFKAERGKVTVLMGRNGAGKTTLLKHLNGLLRPKSGKVIIDGRELKYDRKSLLEVRKRVFYVFQNPDDQILSPTVWQDVAFGPRNLGLKGERLERVVRNALEAVGLSGYEKRLCSTLSGGEKRRLAIASALAMNPDYCIMDEPSANVDGEGLRMIAEIIRKLREEGKGVVVSTHDADLAKEVGDYFYFMDDGKIVWEGEEFSYSVARKLGIRSFSLGKVILAESKIDDHPCFSADELERAVLKAFEGETVVVLGRDDWVIKELEKYPLEVERL.

The ABC transporter domain maps to I2 to L236. ATP is bound at residue G34–T41.

This sequence belongs to the ABC transporter superfamily.

It localises to the cell membrane. Its function is as follows. Probably part of an ABC transporter complex. Responsible for energy coupling to the transport system. The sequence is that of Putative ABC transporter ATP-binding protein AF_0731 from Archaeoglobus fulgidus (strain ATCC 49558 / DSM 4304 / JCM 9628 / NBRC 100126 / VC-16).